The chain runs to 132 residues: Small ribosomal subunit protein uS8c (132 aa).

Belongs to the universal ribosomal protein uS8 family. As to quaternary structure, part of the 30S ribosomal subunit.

The protein resides in the plastid. The protein localises to the chloroplast. In terms of biological role, one of the primary rRNA binding proteins, it binds directly to 16S rRNA central domain where it helps coordinate assembly of the platform of the 30S subunit. The polypeptide is Small ribosomal subunit protein uS8c (rps8) (Ceratophyllum demersum (Rigid hornwort)).